The sequence spans 373 residues: 2-phosphonomethylmalate synthase (373 aa).

The Pyruvate carboxyltransferase domain maps to 5–256; that stretch reads LVLEDTTLRD…DLGIDLTKLK (252 aa).

It belongs to the alpha-IPM synthase/homocitrate synthase family.

It catalyses the reaction 3-phosphonopyruvate + acetyl-CoA + H2O = (R)-2-(phosphonomethyl)malate + CoA + H(+). The protein operates within antibiotic biosynthesis. Functionally, acyltransferase involved in the biosynthesis of the phosphonate antibiotic FR-900098, a potent antimalarial agent that acts as an inhibitor of 1-deoxy-D-xylulose 5-phosphate reductoisomerase (DXR), the first enzyme in the nonmevalonate pathway for isoprenoid biosynthesis. Catalyzes the condensation between acetyl-CoA and phosphonopyruvate to yield (R)-2-(phosphonomethyl)malate. The chain is 2-phosphonomethylmalate synthase from Streptomyces rubellomurinus (strain ATCC 31215).